Here is a 119-residue protein sequence, read N- to C-terminus: Large ribosomal subunit protein bL17 (119 aa).

Belongs to the bacterial ribosomal protein bL17 family. Part of the 50S ribosomal subunit. Contacts protein L32.

In Mesoplasma florum (strain ATCC 33453 / NBRC 100688 / NCTC 11704 / L1) (Acholeplasma florum), this protein is Large ribosomal subunit protein bL17.